Consider the following 368-residue polypeptide: Propane 2-monooxygenase, hydroxylase component small subunit (368 aa).

The protein belongs to the TmoE/XamoE family. The propane 2-monooxygenase multicomponent enzyme system is composed of an electron transfer component and a monooxygenase component interacting with the effector protein MimD. The electron transfer component is composed of a reductase (MimB), and the monooxygenase component is formed by a large subunit (MimA) and a small subunit (MimC). Requires the presence of the chaperonin-like protein MimG to ensure a productive folding, resulting of a soluble MimC, which leads to the active form of MimABCD.

The enzyme catalyses propane + NADH + O2 + H(+) = propan-2-ol + NAD(+) + H2O. It carries out the reaction acetone + NADH + O2 + H(+) = hydroxyacetone + NAD(+) + H2O. The catalysed reaction is butan-2-one + NADH + O2 + H(+) = 1-hydroxy-2-butanone + NAD(+) + H2O. It catalyses the reaction phenol + NADH + O2 + H(+) = hydroquinone + NAD(+) + H2O. Functionally, component of the propane 2-monooxygenase multicomponent enzyme system which is involved in the degradation of propane via the O2-dependent hydroxylation of propane. Also involved in the degradation of acetone via the O2-dependent hydroxylation of acetone. Also able to catalyze the oxidation of phenol, methylethylketone (2-butanone), 1-propanol and 2-propanol. This chain is Propane 2-monooxygenase, hydroxylase component small subunit, found in Mycolicibacterium goodii (Mycobacterium goodii).